Consider the following 346-residue polypeptide: Putative glycosyltransferase HI_0523 (346 aa).

The protein belongs to the glycosyltransferase 9 family.

The polypeptide is Putative glycosyltransferase HI_0523 (Haemophilus influenzae (strain ATCC 51907 / DSM 11121 / KW20 / Rd)).